We begin with the raw amino-acid sequence, 398 residues long: Rhizopuspepsin-4 (398 aa).

Residues 1–21 (MKFTLISSCVALACMALAVEA) form the signal peptide. A propeptide spans 22-74 (APSGKKINVPLSKNANYKPNAKRAIEKANAKYARFRSSSSSSSSSSCGSAGTE) (activation peptide). Over residues 58–78 (SSSSSSSSSSCGSAGTESSGS) the composition is skewed to low complexity. Residues 58–83 (SSSSSSSSSSCGSAGTESSGSVPVTD) form a disordered region. One can recognise a Peptidase A1 domain in the interval 90–394 (YYGEVTVGTP…NPQVPQVQIA (305 aa)). The active site involves Asp-108. A disulfide bond links Cys-121 and Cys-124. Asp-291 is an active-site residue. Cys-325 and Cys-358 are disulfide-bonded.

It belongs to the peptidase A1 family.

The catalysed reaction is Hydrolysis of proteins with broad specificity similar to that of pepsin A, preferring hydrophobic residues at P1 and P1'. Clots milk and activates trypsinogen. Does not cleave 4-Gln-|-His-5, but does cleave 10-His-|-Leu-11 and 12-Val-|-Glu-13 in B chain of insulin.. This chain is Rhizopuspepsin-4, found in Rhizopus niveus.